Reading from the N-terminus, the 2240-residue chain is Death-inducer obliterator 1 (2240 aa).

Methionine 1 is subject to N-acetylmethionine. Residues 1–25 (MDDKGDPSNEEAPKAIKPTSKEFRK) show a composition bias toward basic and acidic residues. Residues 1–259 (MDDKGDPSNE…EPGDLGRPKP (259 aa)) form a disordered region. A phosphoserine mark is found at serine 60 and serine 114. Residues 111–130 (SEGSVESASETRSGPQSAST) are compositionally biased toward polar residues. Positions 132–146 (VKERPASSEKVKGGD) are enriched in basic and acidic residues. A compositionally biased stretch (acidic residues) spans 147 to 156 (DHDDTSDSDS). Threonine 151 bears the Phosphothreonine mark. Serine 152 and serine 154 each carry phosphoserine. 2 consecutive short sequence motifs (nuclear localization signal) follow at residues 165 to 173 (QNRLRRKRE) and 185 to 193 (QSRLRKKRR). The segment covering 172–181 (REQEPTERPL) has biased composition (basic and acidic residues). Over residues 230-246 (GKDDRESKLEGKAAQDI) the composition is skewed to basic and acidic residues. A Glycyl lysine isopeptide (Lys-Gly) (interchain with G-Cter in SUMO2) cross-link involves residue lysine 247. A PHD-type zinc finger spans residues 268–322 (ALYCICRQPHNNRFMICCDRCEEWFHGDCVGISEARGRLLERNGEDYICPNCTIL). Disordered regions lie at residues 431-456 (SGKE…PKCG), 501-567 (STPS…RNLV), 584-618 (KKPP…GPAP), 773-826 (RPAR…EKST), 860-947 (VPSA…EDLS), 1013-1045 (LAKP…PEGD), 1206-1427 (GELD…VAYD), 1453-1472 (RRNS…TPSL), and 1517-2240 (SDAL…ASQA). Residues 433–451 (KEQKPKPKEKMKMKPEKPS) are compositionally biased toward basic and acidic residues. A compositionally biased stretch (polar residues) spans 501–510 (STPSWASDHN). The residue at position 523 (serine 523) is a Phosphoserine. Over residues 530–541 (STKEDRRSEEKA) the composition is skewed to basic and acidic residues. Low complexity-rich tracts occupy residues 542–551 (AAMAASKKTA) and 604–618 (PSSG…GPAP). The TFIIS central domain maps to 670–790 (IRQNIRRSLK…SRTKLHNESK (121 aa)). Basic and acidic residues predominate over residues 773-791 (RPARSVMESRTKLHNESKK). The span at 800–815 (PDLEDSPPVSDSEEQQ) shows a compositional bias: acidic residues. 2 positions are modified to phosphoserine: serine 805 and serine 809. The segment covering 878-890 (VKKEDLKSKHDSS) has biased composition (basic and acidic residues). Residue lysine 879 forms a Glycyl lysine isopeptide (Lys-Gly) (interchain with G-Cter in SUMO2) linkage. Phosphoserine is present on residues serine 889 and serine 898. Residues 930–941 (PGPPGDGHPEPS) are compositionally biased toward pro residues. Residues serine 1019, serine 1030, and serine 1040 each carry the phosphoserine modification. Residues 1207-1220 (ELDKMDEKRTRLQP) show a composition bias toward basic and acidic residues. The residue at position 1244 (tyrosine 1244) is a Phosphotyrosine. Threonine 1256 carries the phosphothreonine modification. Pro residues predominate over residues 1258 to 1271 (PGSPPPPPPLPEPP). A phosphoserine mark is found at serine 1260 and serine 1312. The segment covering 1276 to 1313 (LSSLKPAAPSPATAATTAAAASTAASSTASSASKTASP) has biased composition (low complexity). The segment covering 1376-1392 (LEEEEDDRPYDPEEEYD) has biased composition (acidic residues). A compositionally biased stretch (basic and acidic residues) spans 1393–1424 (PERAFDTQLVERGRRHEVERAPEAAAAEREEV). Serine 1456 carries the post-translational modification Phosphoserine. Threonine 1469 carries the post-translational modification Phosphothreonine. A phosphoserine mark is found at serine 1522 and serine 1714. Over residues 1771-1782 (FPGPRGPAPPFP) the composition is skewed to pro residues. Arginine 1835 carries the post-translational modification Omega-N-methylarginine. The span at 1842–1856 (FEERKDPHGEKREFQ) shows a compositional bias: basic and acidic residues. Asymmetric dimethylarginine is present on residues arginine 1893, arginine 1894, arginine 1977, arginine 1982, arginine 1993, arginine 2008, and arginine 2024. Over residues 2044 to 2059 (AGPPSALSSSAPGQGP) the composition is skewed to low complexity. Composition is skewed to basic and acidic residues over residues 2069 to 2101 (DFRE…KPLE) and 2109 to 2230 (ASED…EASR).

As to quaternary structure, interacts specifically (via PHD-type zinc finger) with histone H3 that is trimethylated at 'Lys-4' (H3K4me3), histone phosphorylation at 'Thr-3' or 'Thr-6' disrupts this binding and promotes translocation of DIDO1 from chromatin to the mitotic spindle during mitosis. In terms of tissue distribution, ubiquitous.

The protein localises to the cytoplasm. The protein resides in the nucleus. Its subcellular location is the cytoskeleton. It is found in the spindle. Functionally, putative transcription factor, weakly pro-apoptotic when overexpressed. Tumor suppressor. Required for early embryonic stem cell development. Displaces isoform 4 at the onset of differentiation, required for repression of stemness genes. The polypeptide is Death-inducer obliterator 1 (DIDO1) (Homo sapiens (Human)).